The sequence spans 316 residues: Pseudouridine-5'-phosphate glycosidase (316 aa).

E31 acts as the Proton donor in catalysis. Residues K92 and V112 each contribute to the substrate site. D144 is a binding site for Mn(2+). Position 146–148 (146–148) interacts with substrate; the sequence is SAD. K165 serves as the catalytic Nucleophile.

It belongs to the pseudouridine-5'-phosphate glycosidase family. Homotrimer. The cofactor is Mn(2+).

The catalysed reaction is D-ribose 5-phosphate + uracil = psi-UMP + H2O. Its function is as follows. Catalyzes the reversible cleavage of pseudouridine 5'-phosphate (PsiMP) to ribose 5-phosphate and uracil. Functions biologically in the cleavage direction, as part of a pseudouridine degradation pathway. Part of an operon that could be involved in the biosynthesis of the blue pigment indigoidine, which is implicated in pathogenicity and protection from oxidative stress. The sequence is that of Pseudouridine-5'-phosphate glycosidase from Dickeya dadantii (strain 3937) (Erwinia chrysanthemi (strain 3937)).